The sequence spans 98 residues: NADH-ubiquinone oxidoreductase chain 4L (98 aa).

Helical transmembrane passes span 1–21 (MSMV…GLLM), 29–49 (SLLC…VTIL), and 61–81 (IILL…LVMV).

Belongs to the complex I subunit 4L family. As to quaternary structure, core subunit of respiratory chain NADH dehydrogenase (Complex I) which is composed of 45 different subunits.

Its subcellular location is the mitochondrion inner membrane. It carries out the reaction a ubiquinone + NADH + 5 H(+)(in) = a ubiquinol + NAD(+) + 4 H(+)(out). Core subunit of the mitochondrial membrane respiratory chain NADH dehydrogenase (Complex I) which catalyzes electron transfer from NADH through the respiratory chain, using ubiquinone as an electron acceptor. Part of the enzyme membrane arm which is embedded in the lipid bilayer and involved in proton translocation. In Eumetopias jubatus (Steller sea lion), this protein is NADH-ubiquinone oxidoreductase chain 4L (MT-ND4L).